We begin with the raw amino-acid sequence, 1040 residues long: Contactin-2 (1040 aa).

The first 30 residues, 1–30 (MGAPARKRASLLLLLLATMALVSSPGWSFS), serve as a signal peptide directing secretion. 6 consecutive Ig-like C2-type domains span residues 39–130 (PVFE…AVLR), 135–224 (QEFS…SVFS), 241–324 (PSIK…GRII), 329–413 (PEWL…AELA), 419–506 (PDFR…GILS), and 511–605 (TKIT…ATVL). Cystine bridges form between Cys63-Cys113, Cys157-Cys209, Cys263-Cys308, and Cys350-Cys397. 3 N-linked (GlcNAc...) asparagine glycosylation sites follow: Asn78, Asn200, and Asn206. N-linked (GlcNAc...) asparagine glycosylation is found at Asn463, Asn479, Asn500, and Asn527. 4 Fibronectin type-III domains span residues 612–710 (PPGG…TKEA), 715–812 (APSG…SAEE), 817–913 (APAK…MKPP), and 917–1008 (PPGN…NGGT). An N-linked (GlcNAc...) asparagine glycan is attached at Asn777. Positions 796-798 (RGD) match the Cell attachment site motif. 3 N-linked (GlcNAc...) asparagine glycosylation sites follow: Asn832, Asn920, and Asn942. The tract at residues 897–922 (GTGPASPSADAMTMKPPPRRPPGNIS) is disordered. Ser1014 carries the GPI-anchor amidated serine lipid modification. The propeptide at 1015–1040 (SAVRPAHPGPVFSCMVILMLAGCQRL) is removed in mature form.

The protein belongs to the immunoglobulin superfamily. Contactin family.

The protein localises to the cell membrane. Its function is as follows. In conjunction with another transmembrane protein, CNTNAP2, contributes to the organization of axonal domains at nodes of Ranvier by maintaining voltage-gated potassium channels at the juxtaparanodal region. The sequence is that of Contactin-2 (Cntn2) from Mus musculus (Mouse).